A 189-amino-acid chain; its full sequence is UPF0312 protein VV2_0231 (189 aa).

A signal peptide spans 1 to 22 (MRKSVIATGLALMMAVPFAANA).

The protein belongs to the UPF0312 family. Type 1 subfamily.

It localises to the periplasm. The sequence is that of UPF0312 protein VV2_0231 from Vibrio vulnificus (strain CMCP6).